The sequence spans 555 residues: Glutamine--tRNA ligase (555 aa).

A 'HIGH' region motif is present at residues 34 to 44 (PEPNGYLHIGH). Residues 35 to 37 (EPN) and 41 to 47 (HIGHAKS) each bind ATP. Positions 67 and 212 each coordinate L-glutamine. Residues threonine 231, 261 to 262 (RL), and 269 to 271 (MSK) each bind ATP. The 'KMSKS' region motif lies at 268–272 (VMSKR). Residues 317-324 (TKQDNTIE) form an interaction with tRNA region.

Belongs to the class-I aminoacyl-tRNA synthetase family. As to quaternary structure, monomer.

It is found in the cytoplasm. It carries out the reaction tRNA(Gln) + L-glutamine + ATP = L-glutaminyl-tRNA(Gln) + AMP + diphosphate. The chain is Glutamine--tRNA ligase from Enterobacter sp. (strain 638).